A 373-amino-acid chain; its full sequence is Cobalt-precorrin-5B C(1)-methyltransferase (373 aa).

The protein belongs to the CbiD family.

The catalysed reaction is Co-precorrin-5B + S-adenosyl-L-methionine = Co-precorrin-6A + S-adenosyl-L-homocysteine. It participates in cofactor biosynthesis; adenosylcobalamin biosynthesis; cob(II)yrinate a,c-diamide from sirohydrochlorin (anaerobic route): step 6/10. Its function is as follows. Catalyzes the methylation of C-1 in cobalt-precorrin-5B to form cobalt-precorrin-6A. The polypeptide is Cobalt-precorrin-5B C(1)-methyltransferase (Listeria monocytogenes serovar 1/2a (strain ATCC BAA-679 / EGD-e)).